The primary structure comprises 779 residues: Probable ATP-dependent RNA helicase DHX40 (779 aa).

The interval 1–28 (MSRFPAVAGRAPRRQEEGERSRDLQEER) is disordered. Residues 13–28 (RRQEEGERSRDLQEER) are compositionally biased toward basic and acidic residues. In terms of domain architecture, Helicase ATP-binding spans 63-231 (IQAVRDNSFL…FGNCPIFDIP (169 aa)). An ATP-binding site is contributed by 76 to 83 (GNTGSGKT). Residues 173 to 176 (DEAH) carry the DEAH box motif. The 180-residue stretch at 263–442 (TMDIHLNEMA…SVVLTLKCLA (180 aa)) folds into the Helicase C-terminal domain. The disordered stretch occupies residues 737–779 (SKDVLKKMQRRNDDKSISDARARFLERKQQRTQDHSDTRKETG).

It belongs to the DEAD box helicase family. DEAH subfamily. As to expression, ubiquitously expressed.

It catalyses the reaction ATP + H2O = ADP + phosphate + H(+). In terms of biological role, probable ATP-dependent RNA helicase. This chain is Probable ATP-dependent RNA helicase DHX40 (DHX40), found in Homo sapiens (Human).